A 268-amino-acid chain; its full sequence is Tryptophan synthase alpha chain (268 aa).

Catalysis depends on proton acceptor residues Glu-49 and Asp-60.

The protein belongs to the TrpA family. In terms of assembly, tetramer of two alpha and two beta chains.

The enzyme catalyses (1S,2R)-1-C-(indol-3-yl)glycerol 3-phosphate + L-serine = D-glyceraldehyde 3-phosphate + L-tryptophan + H2O. It functions in the pathway amino-acid biosynthesis; L-tryptophan biosynthesis; L-tryptophan from chorismate: step 5/5. In terms of biological role, the alpha subunit is responsible for the aldol cleavage of indoleglycerol phosphate to indole and glyceraldehyde 3-phosphate. In Xylella fastidiosa (strain 9a5c), this protein is Tryptophan synthase alpha chain.